Consider the following 862-residue polypeptide: DNA gyrase subunit A (862 aa).

Residues 38-501 (LPDARDGLKP…DYDDIDVEDL (464 aa)) form the Topo IIA-type catalytic domain. Tyrosine 126 functions as the O-(5'-phospho-DNA)-tyrosine intermediate in the catalytic mechanism. The GyrA-box motif lies at 528-534 (QKRGGKG). The segment at 843-862 (KEESDDDDIVADDTQEQDME) is disordered. The segment covering 845-862 (ESDDDDIVADDTQEQDME) has biased composition (acidic residues).

Belongs to the type II topoisomerase GyrA/ParC subunit family. Heterotetramer, composed of two GyrA and two GyrB chains. In the heterotetramer, GyrA contains the active site tyrosine that forms a transient covalent intermediate with DNA, while GyrB binds cofactors and catalyzes ATP hydrolysis.

Its subcellular location is the cytoplasm. It catalyses the reaction ATP-dependent breakage, passage and rejoining of double-stranded DNA.. Functionally, a type II topoisomerase that negatively supercoils closed circular double-stranded (ds) DNA in an ATP-dependent manner to modulate DNA topology and maintain chromosomes in an underwound state. Negative supercoiling favors strand separation, and DNA replication, transcription, recombination and repair, all of which involve strand separation. Also able to catalyze the interconversion of other topological isomers of dsDNA rings, including catenanes and knotted rings. Type II topoisomerases break and join 2 DNA strands simultaneously in an ATP-dependent manner. The chain is DNA gyrase subunit A from Campylobacter fetus.